Consider the following 127-residue polypeptide: MLAVLKGIPLIQDIRAEGNSRSWIMTIDGHPARGEIFSEAFSISLFLNDLESLPKPCLAYVTLLLAAHPDVHDYAIQLTADGGWLNGYYTTSSSSELIAIEIEKHLALTCILKNVIRNHHKLYSGGV.

Its function is as follows. Putative virulence protein. The chain is SpiC homolog (spiC) from Salmonella typhi.